The chain runs to 68 residues: MEC1-mediated checkpoint protein HUG1 (68 aa).

It is found in the cytoplasm. It localises to the nucleus. Involved in the MEC1-mediated checkpoint response to DNA damage and replication arrest. This Saccharomyces cerevisiae (strain ATCC 204508 / S288c) (Baker's yeast) protein is MEC1-mediated checkpoint protein HUG1 (HUG1).